Consider the following 66-residue polypeptide: DNA gyrase inhibitor YacG (66 aa).

Residues Cys10, Cys13, Cys29, and Cys33 each contribute to the Zn(2+) site.

Belongs to the DNA gyrase inhibitor YacG family. In terms of assembly, interacts with GyrB. Requires Zn(2+) as cofactor.

In terms of biological role, inhibits all the catalytic activities of DNA gyrase by preventing its interaction with DNA. Acts by binding directly to the C-terminal domain of GyrB, which probably disrupts DNA binding by the gyrase. This chain is DNA gyrase inhibitor YacG, found in Edwardsiella ictaluri (strain 93-146).